Reading from the N-terminus, the 439-residue chain is Prenyltransferase iacE (439 aa).

Substrate is bound by residues 88-89 (WI), Glu-97, Arg-112, Lys-198, Tyr-200, Arg-271, Lys-273, and Tyr-275.

The protein belongs to the tryptophan dimethylallyltransferase family.

It carries out the reaction siccayne + dimethylallyl diphosphate = pestalodiol + diphosphate. It functions in the pathway secondary metabolite biosynthesis. Prenyltransferase; part of the gene cluster that mediates the biosynthesis of iso-A82775C, a enylepoxycyclohexane and biosynthetic precursor of the chloropestolide anticancer natural products. Within the cluster, the prenyltransferase iacE prenylates siccayne to generate pestalodiol E, using dimethylallyl diphosphate (DMAPP) as cosubstrate. The probable oxidoreductase iacF is then involved in the epoxidation of pestalodiol F to pestalodiol F, which is further converted to pestalofone A by the short-chain dehydrogenase/reductase iacG. Iso-A82775C is subsequently generated from pestalofone A by the short-chain dehydrogenase/reductase iacC. Iso-A82775C is further condensed with maldoxin via a Diels-Alder reaction to produce the anticancer natural products chloropestolides A to E. The polypeptide is Prenyltransferase iacE (Pestalotiopsis fici (strain W106-1 / CGMCC3.15140)).